The chain runs to 161 residues: Putative 4-hydroxy-4-methyl-2-oxoglutarate aldolase (161 aa).

Residues glycine 77–leucine 80 and arginine 99 contribute to the substrate site. A divalent metal cation is bound at residue aspartate 100.

It belongs to the class II aldolase/RraA-like family. In terms of assembly, homotrimer. A divalent metal cation serves as cofactor.

It carries out the reaction 4-hydroxy-4-methyl-2-oxoglutarate = 2 pyruvate. The enzyme catalyses oxaloacetate + H(+) = pyruvate + CO2. Catalyzes the aldol cleavage of 4-hydroxy-4-methyl-2-oxoglutarate (HMG) into 2 molecules of pyruvate. Also contains a secondary oxaloacetate (OAA) decarboxylase activity due to the common pyruvate enolate transition state formed following C-C bond cleavage in the retro-aldol and decarboxylation reactions. The sequence is that of Putative 4-hydroxy-4-methyl-2-oxoglutarate aldolase from Methylococcus capsulatus (strain ATCC 33009 / NCIMB 11132 / Bath).